We begin with the raw amino-acid sequence, 450 residues long: Tubulin alpha-6 chain (450 aa).

7 residues coordinate GTP: Gln-11, Glu-71, Gly-144, Thr-145, Thr-179, Asn-206, and Asn-228. Residue Glu-71 participates in Mg(2+) binding. Residue Glu-254 is part of the active site. Thr-349 is subject to Phosphothreonine. The tract at residues 430 to 450 is disordered; the sequence is KDYEEVGAEGGDDEDDEGEEY. Acidic residues predominate over residues 431 to 450; sequence DYEEVGAEGGDDEDDEGEEY.

This sequence belongs to the tubulin family. Dimer of alpha and beta chains. A typical microtubule is a hollow water-filled tube with an outer diameter of 25 nm and an inner diameter of 15 nM. Alpha-beta heterodimers associate head-to-tail to form protofilaments running lengthwise along the microtubule wall with the beta-tubulin subunit facing the microtubule plus end conferring a structural polarity. Microtubules usually have 13 protofilaments but different protofilament numbers can be found in some organisms and specialized cells. Interacts with TFCB. Requires Mg(2+) as cofactor. Post-translationally, undergoes a tyrosination/detyrosination cycle, the cyclic removal and re-addition of a C-terminal tyrosine residue by the enzymes tubulin tyrosine carboxypeptidase (TTCP) and tubulin tyrosine ligase (TTL), respectively. Acetylation of alpha chains at Lys-40 stabilizes microtubules and affects affinity and processivity of microtubule motors. This modification has a role in multiple cellular functions, ranging from cell motility, cell cycle progression or cell differentiation to intracellular trafficking and signaling.

It localises to the cytoplasm. The protein localises to the cytoskeleton. The enzyme catalyses GTP + H2O = GDP + phosphate + H(+). Tubulin is the major constituent of microtubules, a cylinder consisting of laterally associated linear protofilaments composed of alpha- and beta-tubulin heterodimers. Microtubules grow by the addition of GTP-tubulin dimers to the microtubule end, where a stabilizing cap forms. Below the cap, tubulin dimers are in GDP-bound state, owing to GTPase activity of alpha-tubulin. This is Tubulin alpha-6 chain (TUBA6) from Arabidopsis thaliana (Mouse-ear cress).